Reading from the N-terminus, the 135-residue chain is Small ribosomal subunit protein bS6 (135 aa).

A disordered region spans residues 98 to 135 (EASPMAKAKDERDARRAAISERSSEADEVEENAEESAE). The segment covering 104–122 (KAKDERDARRAAISERSSE) has biased composition (basic and acidic residues). The segment covering 123–135 (ADEVEENAEESAE) has biased composition (acidic residues).

The protein belongs to the bacterial ribosomal protein bS6 family.

Functionally, binds together with bS18 to 16S ribosomal RNA. In Shewanella amazonensis (strain ATCC BAA-1098 / SB2B), this protein is Small ribosomal subunit protein bS6.